We begin with the raw amino-acid sequence, 654 residues long: Dystrobrevin beta (654 aa).

An N-acetylmethionine modification is found at M1. Residues T11, T69, T179, and T212 each carry the phosphothreonine modification. Residues 238 to 294 form a ZZ-type zinc finger; sequence FHPVECSYCHCESMMGFRYRCQQCHNYQLCQNCFWRGHAGGPHSNQHQMKELSSWKS. C243, C246, C258, C261, C267, C270, H280, and H284 together coordinate Zn(2+). S394 carries the post-translational modification Phosphoserine. The syntrophin-binding region stretch occupies residues 399 to 448; it reads DEEHRLIARYAARLAAEAGNMTRPPTDASFNFDANKQQRQLIAELENKNR. T424 is subject to Phosphothreonine. A coiled-coil region spans residues 429–519; it reads NFDANKQQRQ…LEGLMKLLKA (91 aa). Residues 520-562 form a disordered region; sequence QATGSPHTSPTHGGGRSMPMPVRSTSAGSTPTHGPQDSLSGVG. 2 stretches are compositionally biased toward polar residues: residues 521-530 and 542-558; these read ATGSPHTSPT and RSTS…QDSL.

Belongs to the dystrophin family. Dystrobrevin subfamily. As to quaternary structure, interacts with dystrophin short form DP71 and syntrophins SNTG1 and SNTG2. Binds DTNBP1. Forms a specific complex composed of DMD, SNTB2 and SNTA1 in neuron; the interaction with SNTB2 and SNTA1 is DMD independent. Interacts with UTRN and dystrophin short form DP71 in the kidney and liver. Interacts with SNTB1, SNTB2 and SNTA1 in kidney and liver. Interacts with KIF5A. Interacts with HMG20A and HMG20B. Interacts with OLFM1. Interacts with PRKAR2B and PRKAR1A. In terms of processing, phosphorylated by PKA. Phosphorylation at Thr-11 alters the interaction with KIF5A. Expressed in neurons. In the isocortex, expressed most prominently in the somata (including the nuclei) and the dendrites of the pyramidal cells. Expressed in the hippocampus CA1, CA2, and CA3 neurons, namely in the initial segments of dendrites. Expressed in the Purkinje cells, molecular layer interneurons, and granule cells of cerebellum. Expressed in axon fascicles associated with the spinal trigeminal tract and in the internal capsule in the brainstem.

It localises to the cytoplasm. The protein resides in the postsynaptic density. Its subcellular location is the cell projection. The protein localises to the dendrite. It is found in the basal cell membrane. It localises to the postsynapse. The protein resides in the nucleus. Scaffolding protein that assembles DMD and SNTA1 molecules to the basal membrane of kidney cells and liver sinusoids. May function as a repressor of the SYN1 promoter through the binding of repressor element-1 (RE-1), in turn regulates SYN1 expression and may be involved in cell proliferation regulation during the early phase of neural differentiation. May be required for proper maturation and function of a subset of inhibitory synapses. The sequence is that of Dystrobrevin beta from Rattus norvegicus (Rat).